We begin with the raw amino-acid sequence, 182 residues long: MSTQDLEASMRKSVEATQRNFNTIRTGRANSSLLDRISVEYYGAETPLKSLATLSTPDSQTIQIQPFDISALASIEKAIAMSELGFTPNNDGKIIRINVPPLTEERRKEFCKLASKYAEEGKVALRNLRRDAIDKVKKQEKDGDFSEDQSRDEQDAVQKTLDKFIAELEKHLADKEADILKV.

Belongs to the RRF family.

Its subcellular location is the cytoplasm. Responsible for the release of ribosomes from messenger RNA at the termination of protein biosynthesis. May increase the efficiency of translation by recycling ribosomes from one round of translation to another. This is Ribosome-recycling factor from Parasynechococcus marenigrum (strain WH8102).